Consider the following 431-residue polypeptide: UDP-N-acetylglucosamine 1-carboxyvinyltransferase (431 aa).

A phosphoenolpyruvate-binding site is contributed by 22–23 (KN). Arg-102 is a binding site for UDP-N-acetyl-alpha-D-glucosamine. The Proton donor role is filled by Cys-126. Cys-126 is subject to 2-(S-cysteinyl)pyruvic acid O-phosphothioketal. UDP-N-acetyl-alpha-D-glucosamine-binding residues include Asp-318 and Ile-340.

This sequence belongs to the EPSP synthase family. MurA subfamily.

The protein resides in the cytoplasm. It carries out the reaction phosphoenolpyruvate + UDP-N-acetyl-alpha-D-glucosamine = UDP-N-acetyl-3-O-(1-carboxyvinyl)-alpha-D-glucosamine + phosphate. It functions in the pathway cell wall biogenesis; peptidoglycan biosynthesis. Functionally, cell wall formation. Adds enolpyruvyl to UDP-N-acetylglucosamine. The polypeptide is UDP-N-acetylglucosamine 1-carboxyvinyltransferase (Bartonella henselae (strain ATCC 49882 / DSM 28221 / CCUG 30454 / Houston 1) (Rochalimaea henselae)).